Consider the following 329-residue polypeptide: Phosphate acyltransferase (329 aa).

The protein belongs to the PlsX family. Homodimer. Probably interacts with PlsY.

It localises to the cytoplasm. It catalyses the reaction a fatty acyl-[ACP] + phosphate = an acyl phosphate + holo-[ACP]. Its pathway is lipid metabolism; phospholipid metabolism. Catalyzes the reversible formation of acyl-phosphate (acyl-PO(4)) from acyl-[acyl-carrier-protein] (acyl-ACP). This enzyme utilizes acyl-ACP as fatty acyl donor, but not acyl-CoA. This Anoxybacillus flavithermus (strain DSM 21510 / WK1) protein is Phosphate acyltransferase.